Consider the following 485-residue polypeptide: Glycogen synthase (485 aa).

ADP-alpha-D-glucose is bound at residue lysine 20.

The protein belongs to the glycosyltransferase 1 family. Bacterial/plant glycogen synthase subfamily.

The enzyme catalyses [(1-&gt;4)-alpha-D-glucosyl](n) + ADP-alpha-D-glucose = [(1-&gt;4)-alpha-D-glucosyl](n+1) + ADP + H(+). Its pathway is glycan biosynthesis; glycogen biosynthesis. Synthesizes alpha-1,4-glucan chains using ADP-glucose. The polypeptide is Glycogen synthase (Vibrio vulnificus (strain YJ016)).